The primary structure comprises 1242 residues: Reverse gyrase 1 (1242 aa).

The RG N-terminal-type zinc-finger motif lies at 6 to 46; the sequence is KVPPSIYTRSCPNCGGNISSQRLFNGSVCESCLKDDREFSN. Zn(2+) is bound by residues Cys-16, Cys-19, Cys-34, and Cys-37. ATP is bound by residues Gln-93 and 110-117; that span reads APPGLGKT. One can recognise a Helicase ATP-binding domain in the interval 97-298; sequence TIRFLRGESF…SLMGFRPGSS (202 aa). Positions 214–217 match the DEAD box motif; it reads DDVD. The segment at 615-1242 is topoisomerase I; that stretch reads LSVKTTLFIV…ELYNEIQTIS (628 aa). Residues 619–785 enclose the Toprim domain; the sequence is TTLFIVESPN…NIKRAEFHEV (167 aa). Glu-625 provides a ligand contact to Mg(2+). The segment at 703 to 731 adopts an RG C-terminal-type; atypical zinc-finger fold; the sequence is IKKCEKGHQIVKDLSQNKCPICGSRIVTD. Zn(2+) is bound by residues Cys-706, His-710, Cys-721, and Cys-724. Asp-754 is a Mg(2+) binding site. Residues 801–1242 form the Topo IA-type catalytic domain; it reads NDNLVKSQIV…ELYNEIQTIS (442 aa). Tyr-965 acts as the O-(5'-phospho-DNA)-tyrosine intermediate in catalysis.

In the N-terminal section; belongs to the DEAD box helicase family. DDVD subfamily. The protein in the C-terminal section; belongs to the type IA topoisomerase family. As to quaternary structure, monomer. The cofactor is Zn(2+). It depends on Mg(2+) as a cofactor.

The protein localises to the cytoplasm. The enzyme catalyses ATP + H2O = ADP + phosphate + H(+). At least one of the two reverse gyrase proteins is inhibited by actinomycin D. Highly sensitive to NaCl concentrations, maximal positive supercoiling is observed with 10 mM NaCl; as NaCl rises, supercoiling decreases. At 300 mM NaCl relaxes but does not introduce positive supercoils into negatively supercoiled substrate, at 400 mM NaCl does not relax DNA. Modifies the topological state of DNA by introducing positive supercoils in an ATP-dependent process. Increases the linking number in steps of +1. Involved in homeostatic control of DNA topology in balance with type II topoisomerase 6 (TopoVI); levels of TopoVI are constant at 80 and 88 degrees Celsius and TopoVI is probably less active at 88 degrees (characterized enzyme is from S.shibatae B12), so reverse gyrase mediates most of the fine-tuning of DNA topology. Changes the DNA linking number step-by-step in a distributive manner. At low protein to DNA ratios mostly relaxes negatively supercoiled substrate, as ratios rise more positive supercoils are introduced. At 90 degrees Celsius introduces 19 positive supercoils into pTZ18R DNA (probably 2860 bp), less than TopR2. Relaxes negatively supercoiled DNA in the absence of ATP. It cleaves transiently a single DNA strand and remains covalently bound to the 5' DNA end through a tyrosine residue. May be involved in DNA damage response. Its activity is inhibited by the DNA-binding protein 7d (Sso7d), suggesting that the Sso7d activity might counteract the overwinding effect of reverse gyrase. Its function is as follows. Resolves 4-way Holliday junctions (HJ) with 20 bases in each arm in vitro, distorting the junction. Very high protein levels are required, but total enzyme content of the cell (there are 2 reverse gyrases in this organism) is estimated to be 20-200 molecules/cell. HJ resolution does not require either ATPase activity or the active tyrosine. The individual domains do not resolve HJs but do so when mixed. Also unwinds a fork substrate. Functionally, there are 2 genes for this protein in the cell. During exponential growth this is the less expressed isoform (about 52 molecules per cell at 80 degrees Celsius, about 28 molecules at 88 degrees Celsius); this isoform is more active at higher temperature. Grows actively at both 80 and 88 degrees Celsius; survives a long exposure at 45 degrees Celsius without DNA replication or cell division occurring. Experiments using whole cell extracts do not distinguish which isoform is present, the results are probably a mixture of the two forms. This Saccharolobus solfataricus (strain ATCC 35092 / DSM 1617 / JCM 11322 / P2) (Sulfolobus solfataricus) protein is Reverse gyrase 1.